The chain runs to 386 residues: MGEVQEGPKVEQEKKPAATVVPVETTDGKPKSGGGDSAAAAAPPVAAVVSAFVYKVDMHCEGCAKKIKRMVKHFDGVKDVTADTGGNKLLVVGKIDPVKLQEKLEEKTKRKVVLANPPPKVEGPVAAAVGEKKADGGDKEAAPPAPAPAAPKESVVPLKIRLHCEGCIQKIKKIILKIKGVETVAIDGAKDVVTVKGTIDVKELVPLLTKKLKRTVEPLVPAKKDDGAAENKKTEAAAPDAKKEAPSAGVNEAKKEGSDGGEKKKEVGDGGEKKKEGGDGGEKKKEAGDGGEKKKDGGGVPAPVAMVNKMDYYGYSAYPTAPMHWQEGHVYGQSYSMTGQNYPVGGQSYPGSGYNYASESYVPYAQPNVNAPGMFSDENPNGCSVM.

Residues 1–16 (MGEVQEGPKVEQEKKP) show a composition bias toward basic and acidic residues. The tract at residues 1-40 (MGEVQEGPKVEQEKKPAATVVPVETTDGKPKSGGGDSAAA) is disordered. The region spanning 49 to 112 (VSAFVYKVDM…KLEEKTKRKV (64 aa)) is the HMA 1 domain. Residues cysteine 60 and cysteine 63 each coordinate a metal cation. The segment at 129-153 (VGEKKADGGDKEAAPPAPAPAAPKE) is disordered. Basic and acidic residues predominate over residues 130–141 (GEKKADGGDKEA). The HMA 2 domain maps to 153–220 (ESVVPLKIRL…KLKRTVEPLV (68 aa)). 2 residues coordinate a metal cation: cysteine 164 and cysteine 167. Basic and acidic residues-rich tracts occupy residues 223–245 (KKDD…KKEA) and 252–297 (EAKK…KKDG). The tract at residues 223–301 (KKDDGAAENK…EKKKDGGGVP (79 aa)) is disordered. The residue at position 383 (cysteine 383) is a Cysteine methyl ester. Cysteine 383 carries S-farnesyl cysteine lipidation. Residues 384-386 (SVM) constitute a propeptide, removed in mature form.

This sequence belongs to the HIPP family. Post-translationally, efficiently farnesylated in vitro.

Heavy-metal-binding protein. Involved in disease resistance. This is Heavy metal-associated isoprenylated plant protein 5 from Arabidopsis thaliana (Mouse-ear cress).